A 305-amino-acid chain; its full sequence is Putative monooxygenase p33MONOX (305 aa).

2 disordered regions span residues 1 to 20 (MASRQPEVPALEASGPLGKM) and 37 to 56 (LEDPAPMTPPPSDMGSVPWK). A Phosphothreonine modification is found at Thr-44. A Flavin-containing monooxygenase motif motif is present at residues 67–77 (LAKVEEGEASL). The disordered stretch occupies residues 159-305 (SGEITKEERQ…DLNVLTPTGF (147 aa)). A compositionally biased stretch (low complexity) spans 169–183 (PASAQSTPSTTPHSS). A Phosphothreonine modification is found at Thr-175. Residues Ser-182 and Ser-183 each carry the phosphoserine modification. Polar residues-rich tracts occupy residues 191–210 (WFTSGSSTALPGPNPSTMDS) and 233–243 (KYDSGSSTTQA).

This sequence belongs to the P33MONOX family. Interacts with NELFB, NOL12 and PRNP.

Its subcellular location is the cytoplasm. Functionally, potential NADPH-dependent oxidoreductase. May be involved in the regulation of neuronal survival, differentiation and axonal outgrowth. In Pongo abelii (Sumatran orangutan), this protein is Putative monooxygenase p33MONOX (P33MONOX).